The chain runs to 293 residues: NAD-dependent protein deacetylase (293 aa).

One can recognise a Deacetylase sirtuin-type domain in the interval 1-284; it reads MTVAITQTGP…QPPDPLHTAT (284 aa). NAD(+) contacts are provided by residues 27–47 and 105–108; these read GAGCSTDSGIPDYRDLQGGWK and QNVD. Histidine 123 (proton acceptor) is an active-site residue. Zn(2+) is bound by residues cysteine 131, cysteine 134, cysteine 182, and cysteine 185. Residues 222-224, 248-250, and cysteine 266 contribute to the NAD(+) site; these read GSS and NFG.

The protein belongs to the sirtuin family. Class II subfamily. It depends on Zn(2+) as a cofactor.

The protein localises to the cytoplasm. The catalysed reaction is N(6)-acetyl-L-lysyl-[protein] + NAD(+) + H2O = 2''-O-acetyl-ADP-D-ribose + nicotinamide + L-lysyl-[protein]. Its function is as follows. NAD-dependent protein deacetylase which modulates the activities of several enzymes which are inactive in their acetylated form. In Xanthomonas campestris pv. campestris (strain 8004), this protein is NAD-dependent protein deacetylase.